Reading from the N-terminus, the 179-residue chain is Apoptosis regulator Bcl-2 homolog (179 aa).

The short motif at 76-95 (ELFKDLINWGRICGFIVFSA) is the BH1 element. The BH2 signature appears at 126 to 141 (PWMISHGGQEEFLAFS).

The protein belongs to the Bcl-2 family. In terms of assembly, interacts with host BECN1 (via BH3 homology domain); this interaction allows the virus to inhibit BECN1, and thus autophagy. Interacts with host BID. Interacts with host BAX.

It is found in the host mitochondrion. It localises to the host endoplasmic reticulum. In terms of biological role, suppresses apoptosis in host cell to promote the viral replication. Has the ability to potentially bind to all the members of the proapoptotic Bcl-2 family. Inhibits autophagy by interacting with host Beclin 1 (BECN1). This chain is Apoptosis regulator Bcl-2 homolog, found in Ornithodoros (relapsing fever ticks).